We begin with the raw amino-acid sequence, 617 residues long: Threonine--tRNA ligase (617 aa).

Positions 209–502 (DHRRLGKDLD…MTENYAGDFP (294 aa)) are catalytic. Residues Cys302, His353, and His479 each coordinate Zn(2+).

It belongs to the class-II aminoacyl-tRNA synthetase family. In terms of assembly, homodimer. It depends on Zn(2+) as a cofactor.

The protein localises to the cytoplasm. The enzyme catalyses tRNA(Thr) + L-threonine + ATP = L-threonyl-tRNA(Thr) + AMP + diphosphate + H(+). In terms of biological role, catalyzes the attachment of threonine to tRNA(Thr) in a two-step reaction: L-threonine is first activated by ATP to form Thr-AMP and then transferred to the acceptor end of tRNA(Thr). Also edits incorrectly charged L-seryl-tRNA(Thr). The sequence is that of Threonine--tRNA ligase from Synechococcus sp. (strain CC9311).